Reading from the N-terminus, the 445-residue chain is Methyl-CpG-binding domain protein 4-like protein (445 aa).

Asp429 is a catalytic residue.

In terms of tissue distribution, isoform 1 and isoform 4: Expressed in leaves and flowers, but not in roots or stems.

It localises to the nucleus. Its function is as follows. Monofunctional DNA glycosylase targeting U:G and T:G mispairs. Excises uracil derivatives and exhibits a preference for a CpG sequence context, irrespective of the methylation status of the complementary strand. The activity follows a biphasic kinetics, with an initial burst of product accumulation followed by a slower phase. Specifically binds its reaction product. Triggers the base excision repair (BER) pathway. The polypeptide is Methyl-CpG-binding domain protein 4-like protein (Arabidopsis thaliana (Mouse-ear cress)).